The primary structure comprises 374 residues: Erythronate-4-phosphate dehydrogenase (374 aa).

Residues serine 53 and threonine 75 each contribute to the substrate site. Aspartate 160 lines the NAD(+) pocket. The active site involves arginine 222. Aspartate 246 provides a ligand contact to NAD(+). Glutamate 251 is an active-site residue. Residue histidine 268 is the Proton donor of the active site. Glycine 271 is a binding site for NAD(+). Tyrosine 272 is a substrate binding site.

This sequence belongs to the D-isomer specific 2-hydroxyacid dehydrogenase family. PdxB subfamily. Homodimer.

It is found in the cytoplasm. The catalysed reaction is 4-phospho-D-erythronate + NAD(+) = (R)-3-hydroxy-2-oxo-4-phosphooxybutanoate + NADH + H(+). The protein operates within cofactor biosynthesis; pyridoxine 5'-phosphate biosynthesis; pyridoxine 5'-phosphate from D-erythrose 4-phosphate: step 2/5. Catalyzes the oxidation of erythronate-4-phosphate to 3-hydroxy-2-oxo-4-phosphonooxybutanoate. This is Erythronate-4-phosphate dehydrogenase from Psychrobacter sp. (strain PRwf-1).